The sequence spans 293 residues: tRNA pseudouridine synthase B (293 aa).

Asp39 serves as the catalytic Nucleophile.

Belongs to the pseudouridine synthase TruB family. Type 1 subfamily.

It catalyses the reaction uridine(55) in tRNA = pseudouridine(55) in tRNA. Responsible for synthesis of pseudouridine from uracil-55 in the psi GC loop of transfer RNAs. The polypeptide is tRNA pseudouridine synthase B (Rickettsia bellii (strain RML369-C)).